We begin with the raw amino-acid sequence, 360 residues long: Phospho-N-acetylmuramoyl-pentapeptide-transferase (360 aa).

Helical transmembrane passes span 21–41 (YVTFRAILGLLTALIFSLWWG), 74–94 (MGGILILAGVFISVLLWGDLA), 97–117 (YVWVVLFVLASFGLIGFIDDY), 135–155 (ILQSLAALVIAFYLYASADLV), 168–188 (IMPQLGGFFIVLAYFTIVGSS), 199–219 (GLAIMPTVMVAAAFALIAYLS), 236–256 (AGELVIVCTAIVGAGLGFLWF), 263–283 (VFMGDVGSLALGAALGVIAVL), 288–308 (ILLVIMGGVFVMETVSVILQV), and 338–358 (VIVRFWIISLFLVLLGLATLK).

It belongs to the glycosyltransferase 4 family. MraY subfamily. Mg(2+) is required as a cofactor.

It localises to the cell inner membrane. The enzyme catalyses UDP-N-acetyl-alpha-D-muramoyl-L-alanyl-gamma-D-glutamyl-meso-2,6-diaminopimeloyl-D-alanyl-D-alanine + di-trans,octa-cis-undecaprenyl phosphate = di-trans,octa-cis-undecaprenyl diphospho-N-acetyl-alpha-D-muramoyl-L-alanyl-D-glutamyl-meso-2,6-diaminopimeloyl-D-alanyl-D-alanine + UMP. Its pathway is cell wall biogenesis; peptidoglycan biosynthesis. Functionally, catalyzes the initial step of the lipid cycle reactions in the biosynthesis of the cell wall peptidoglycan: transfers peptidoglycan precursor phospho-MurNAc-pentapeptide from UDP-MurNAc-pentapeptide onto the lipid carrier undecaprenyl phosphate, yielding undecaprenyl-pyrophosphoryl-MurNAc-pentapeptide, known as lipid I. This Shewanella sediminis (strain HAW-EB3) protein is Phospho-N-acetylmuramoyl-pentapeptide-transferase.